The following is a 318-amino-acid chain: Large ribosomal subunit protein uL10 (318 aa).

At Y24 the chain carries Phosphotyrosine. T59 carries the post-translational modification Phosphothreonine. K264 is covalently cross-linked (Glycyl lysine isopeptide (Lys-Gly) (interchain with G-Cter in ubiquitin)). Residue K298 forms a Glycyl lysine isopeptide (Lys-Gly) (interchain with G-Cter in SUMO1); alternate linkage. A Glycyl lysine isopeptide (Lys-Gly) (interchain with G-Cter in SUMO2); alternate cross-link involves residue K298. Positions 298 to 318 (KVEAKEESEESDEDMGFGLFD) are disordered. The span at 303–312 (EESEESDEDM) shows a compositional bias: acidic residues. A phosphoserine mark is found at S305 and S308.

It belongs to the universal ribosomal protein uL10 family. P0 forms a pentameric complex by interaction with dimers of P1 and P2. Identified in a IGF2BP1-dependent mRNP granule complex containing untranslated mRNAs. Interacts with APEX1. Interacts with FMR1. Post-translationally, ubiquitinated at Lys-264 by RNF14 and RNF25 in response to ribosome collisions (ribosome stalling).

It localises to the nucleus. Its subcellular location is the cytoplasm. In terms of biological role, ribosomal protein P0 is the functional equivalent of E.coli protein L10. This is Large ribosomal subunit protein uL10 (RPLP0) from Sus scrofa (Pig).